The chain runs to 264 residues: SPRY domain-containing SOCS box protein 2 (264 aa).

The span at methionine 1–alanine 18 shows a compositional bias: polar residues. The segment at methionine 1–cysteine 53 is disordered. Positions serine 21 to serine 34 are enriched in low complexity. A B30.2/SPRY domain is found at proline 26–arginine 221. In terms of domain architecture, SOCS box spans alanine 222–lysine 264.

The protein belongs to the SPSB family. In terms of assembly, component of the probable ECS(SPSB2) E3 ubiquitin-protein ligase complex which contains CUL5, RNF7/RBX2, Elongin BC complex and SPSB2. Interacts with CUL5, RNF7, ELOB and ELOC. Interacts with MET. Interacts (via B30.2/SPRY domain) with PAWR; this interaction occurs in association with the Elongin BC complex. Interacts with NOS2.

It is found in the cytoplasm. The protein localises to the cytosol. The protein operates within protein modification; protein ubiquitination. Functionally, substrate recognition component of a SCF-like ECS (Elongin BC-CUL2/5-SOCS-box protein) E3 ubiquitin-protein ligase complex which mediates the ubiquitination and subsequent proteasomal degradation of target proteins. Negatively regulates nitric oxide (NO) production and limits cellular toxicity in activated macrophages by mediating the ubiquitination and proteasomal degradation of NOS2. Acts as a bridge which links NOS2 with the ECS E3 ubiquitin ligase complex components ELOC and CUL5. In Rattus norvegicus (Rat), this protein is SPRY domain-containing SOCS box protein 2 (Spsb2).